The chain runs to 130 residues: Small ribosomal subunit protein uS8 (130 aa).

This sequence belongs to the universal ribosomal protein uS8 family. In terms of assembly, part of the 30S ribosomal subunit. Contacts proteins S5 and S12.

One of the primary rRNA binding proteins, it binds directly to 16S rRNA central domain where it helps coordinate assembly of the platform of the 30S subunit. This Buchnera aphidicola subsp. Cinara cedri (strain Cc) protein is Small ribosomal subunit protein uS8.